A 441-amino-acid polypeptide reads, in one-letter code: Carbohydrate sulfotransferase 3 (441 aa).

Topologically, residues 1-4 (MKMR) are cytoplasmic. The helical; Signal-anchor for type II membrane protein transmembrane segment at 5-21 (SKYAIILFFVVALVIIE) threads the bilayer. Topologically, residues 22–441 (KERNIISRVS…LLENRNFWIT (420 aa)) are lumenal. N47 and N58 each carry an N-linked (GlcNAc...) asparagine glycan. 106 to 112 (TRTGSSF) serves as a coordination point for 3'-phosphoadenylyl sulfate. N-linked (GlcNAc...) asparagine glycosylation is present at N221. Residue 266-274 (RDPRAVLAS) coordinates 3'-phosphoadenylyl sulfate. N427 carries N-linked (GlcNAc...) asparagine glycosylation.

Belongs to the sulfotransferase 1 family. Gal/GlcNAc/GalNAc subfamily. N-glycosylated. In terms of tissue distribution, in electric organ, it is moderately expressed in spinal cord and electric lobe and undetectable in non-neural tissues. Expressed in a punctate distribution in the innervated portion of electrocytes. In the CNS, it is localized within the somas of motor neurons and neurons of the electromotor nucleus.

The protein localises to the golgi apparatus membrane. The catalysed reaction is chondroitin beta-D-glucuronate + n 3'-phosphoadenylyl sulfate = chondroitin 6'-sulfate + n adenosine 3',5'-bisphosphate + n H(+). It catalyses the reaction 3'-phosphoadenylyl sulfate + keratan = adenosine 3',5'-bisphosphate + keratan 6'-sulfate.. Functionally, sulfotransferase that utilizes 3'-phospho-5'-adenylyl sulfate (PAPS) as sulfonate donor to catalyze the transfer of sulfate to position 6 of the N-acetylgalactosamine (GalNAc) residue of chondroitin. Chondroitin sulfate constitutes the predominant proteoglycan present in cartilage and is distributed on the surfaces of many cells and extracellular matrices. Catalyzes with a lower efficiency the sulfation of Gal residues of keratan sulfate, another glycosaminoglycan. Can also catalyze the sulfation of the Gal residues in sialyl N-acetyllactosamine (sialyl LacNAc) oligosaccharides. This chain is Carbohydrate sulfotransferase 3 (CHST3), found in Tetronarce californica (Pacific electric ray).